Consider the following 540-residue polypeptide: Tyrosinase (540 aa).

Residues 1–19 form the signal peptide; that stretch reads MKSLFLSAVLLQFFETCWS. Over 20-480 the chain is Lumenal, melanosome; sequence QFPRPCANSE…LQQAQQIWQW (461 aa). An N-linked (GlcNAc...) asparagine glycan is attached at N87. Residues H182, H205, and H214 each coordinate Cu cation. N233, N293, and N340 each carry an N-linked (GlcNAc...) asparagine glycan. Residues H366 and H370 each contribute to the Cu cation site. N374 carries an N-linked (GlcNAc...) asparagine glycan. H393 is a Cu cation binding site. A helical transmembrane segment spans residues 481-501; the sequence is LLGAGILGALIATIVAAVIVF. Residues 502–540 lie on the Cytoplasmic side of the membrane; it reads ARRKRRRNQKRKRAPSFGERQPLLQSSSEEGSSSYQTTL. The disordered stretch occupies residues 511 to 540; that stretch reads KRKRAPSFGERQPLLQSSSEEGSSSYQTTL. Residues 527 to 540 show a composition bias toward low complexity; sequence SSSEEGSSSYQTTL.

Belongs to the tyrosinase family. The cofactor is Cu(2+).

It is found in the melanosome membrane. It catalyses the reaction 2 L-dopa + O2 = 2 L-dopaquinone + 2 H2O. The catalysed reaction is L-tyrosine + O2 = L-dopaquinone + H2O. This is a copper-containing oxidase that functions in the formation of pigments such as melanins and other polyphenolic compounds. The polypeptide is Tyrosinase (tyr) (Oryzias latipes (Japanese rice fish)).